A 501-amino-acid polypeptide reads, in one-letter code: ATP synthase subunit alpha (501 aa).

Residue 169-176 (GDRQTGKT) participates in ATP binding.

This sequence belongs to the ATPase alpha/beta chains family. As to quaternary structure, F-type ATPases have 2 components, CF(1) - the catalytic core - and CF(0) - the membrane proton channel. CF(1) has five subunits: alpha(3), beta(3), gamma(1), delta(1), epsilon(1). CF(0) has three main subunits: a(1), b(2) and c(9-12). The alpha and beta chains form an alternating ring which encloses part of the gamma chain. CF(1) is attached to CF(0) by a central stalk formed by the gamma and epsilon chains, while a peripheral stalk is formed by the delta and b chains.

Its subcellular location is the cell inner membrane. It carries out the reaction ATP + H2O + 4 H(+)(in) = ADP + phosphate + 5 H(+)(out). Its function is as follows. Produces ATP from ADP in the presence of a proton gradient across the membrane. The alpha chain is a regulatory subunit. The protein is ATP synthase subunit alpha of Campylobacter jejuni subsp. doylei (strain ATCC BAA-1458 / RM4099 / 269.97).